Reading from the N-terminus, the 277-residue chain is Release factor glutamine methyltransferase (277 aa).

Residues 117-121 (GTGTG), Asp-140, Trp-168, and Asn-183 each bind S-adenosyl-L-methionine. Substrate is bound at residue 183–186 (NPPY).

This sequence belongs to the protein N5-glutamine methyltransferase family. PrmC subfamily.

The catalysed reaction is L-glutaminyl-[peptide chain release factor] + S-adenosyl-L-methionine = N(5)-methyl-L-glutaminyl-[peptide chain release factor] + S-adenosyl-L-homocysteine + H(+). Functionally, methylates the class 1 translation termination release factors RF1/PrfA and RF2/PrfB on the glutamine residue of the universally conserved GGQ motif. The chain is Release factor glutamine methyltransferase from Shigella flexneri.